Consider the following 66-residue polypeptide: Phylloseptin-H8 (66 aa).

Positions 1 to 22 (MAFLKKSLFLVLFLGLVSLSIC) are cleaved as a signal peptide. The propeptide occupies 23–44 (EEEKRETEEEENDQEEDDKSEE). A disordered region spans residues 25 to 44 (EKRETEEEENDQEEDDKSEE). Positions 30-41 (EEEENDQEEDDK) are enriched in acidic residues. At leucine 65 the chain carries Leucine amide.

In terms of tissue distribution, expressed by the skin glands.

The protein resides in the secreted. Functionally, has antimicrobial activity. This chain is Phylloseptin-H8, found in Pithecopus hypochondrialis (Orange-legged leaf frog).